Here is a 152-residue protein sequence, read N- to C-terminus: Transcriptional regulator MraZ (152 aa).

SpoVT-AbrB domains are found at residues 5–52 (ATLV…PLPE) and 81–124 (ASEC…DETT).

It belongs to the MraZ family. Dodecamer.

The protein resides in the cytoplasm. Its subcellular location is the nucleoid. Its function is as follows. Negatively regulates its own expression and that of the subsequent genes in the proximal part of the division and cell wall (dcw) gene cluster. Acts by binding directly to DNA. May also regulate the expression of genes outside the dcw cluster. The chain is Transcriptional regulator MraZ from Escherichia coli (strain K12).